The primary structure comprises 621 residues: MYDVIVAGAGHAGTEAALAVSRSGLSCLLVTTDLNAVARMSCNPAIGGVAKGQITREIDALGGEMAKAIDSTGIQFRMLNLSKGPAMHSPRAQADRVAYTAYMKRALEEEVNLDLLQDTVTGIEQREGILRGVRLLSGRLVTGRAAILTCGTFLNGLIHIGMDHYPGGRTIAEPPVTGLTENLILAGFEAGRLKTGTPPRIDRRSVDYSRVEEQKGDENPPPFSFSTPTLKGRAQLSCYVTHSSERTHEILKTGFDRSPLFTGKVQGIGPRYCPSIEDKIFRFPDRPGHHIFLEPEGFETNEMYVNGFSTSLPEDIQIDGLRSMKGLEEVKLIRAGYAIEYDYFPPYQIHSTLETKRIRNLYFAGQINGTSGYEEAAAQGLLAGINAAADILKRPALRLKRSDAYIGVLVDDLVTKEMKEPYRMFTSSAEHRLMLRHDNADIRLMHFGHQSGLVSDAAMERCRTKMRAIGEIKALTEKTAIPAEVLDSLISKQGQPHAASGQKISAAIKRPGMSLEILMNSLPPFREALLSISTDKEAHQQVEIDLKYEGYLKRELLTADKIARLDALQIPSEYNYSCIKGLSSEGVEKLISHRPETLGQASRISGVSPSDISVLMVHIGR.

8–13 lines the FAD pocket; that stretch reads GAGHAG. Residues 199 to 227 form a disordered region; the sequence is PRIDRRSVDYSRVEEQKGDENPPPFSFST. Over residues 200–218 the composition is skewed to basic and acidic residues; the sequence is RIDRRSVDYSRVEEQKGDE. 269–283 lines the NAD(+) pocket; the sequence is GPRYCPSIEDKIFRF.

This sequence belongs to the MnmG family. As to quaternary structure, homodimer. Heterotetramer of two MnmE and two MnmG subunits. FAD serves as cofactor.

Its subcellular location is the cytoplasm. Functionally, NAD-binding protein involved in the addition of a carboxymethylaminomethyl (cmnm) group at the wobble position (U34) of certain tRNAs, forming tRNA-cmnm(5)s(2)U34. This Chlorobium luteolum (strain DSM 273 / BCRC 81028 / 2530) (Pelodictyon luteolum) protein is tRNA uridine 5-carboxymethylaminomethyl modification enzyme MnmG.